We begin with the raw amino-acid sequence, 363 residues long: DNA replication and repair protein RecF (363 aa).

30-37 contributes to the ATP binding site; sequence GDNAQGKT.

It belongs to the RecF family.

It localises to the cytoplasm. In terms of biological role, the RecF protein is involved in DNA metabolism; it is required for DNA replication and normal SOS inducibility. RecF binds preferentially to single-stranded, linear DNA. It also seems to bind ATP. The protein is DNA replication and repair protein RecF of Syntrophotalea carbinolica (strain DSM 2380 / NBRC 103641 / GraBd1) (Pelobacter carbinolicus).